The sequence spans 156 residues: Large ribosomal subunit protein uL22 (156 aa).

The protein belongs to the universal ribosomal protein uL22 family. In terms of assembly, part of the 50S ribosomal subunit.

Its function is as follows. This protein binds specifically to 23S rRNA. It makes multiple contacts with different domains of the 23S rRNA in the assembled 50S subunit and ribosome. The globular domain of the protein is located near the polypeptide exit tunnel on the outside of the subunit, while an extended beta-hairpin is found that lines the wall of the exit tunnel in the center of the 70S ribosome. The protein is Large ribosomal subunit protein uL22 of Aeropyrum pernix (strain ATCC 700893 / DSM 11879 / JCM 9820 / NBRC 100138 / K1).